A 169-amino-acid chain; its full sequence is Myosin regulatory light chain 11 (169 aa).

A2 carries the post-translational modification N,N,N-trimethylalanine. Residues S15 and S16 each carry the phosphoserine modification. T25 and T35 each carry phosphothreonine. Residues 25 to 60 (TQIQEFKEAFTVIDQNRDGIIDKEDLRDTFAAMGRL) enclose the EF-hand 1 domain. The Ca(2+) site is built by D38, N40, D42, and D49. A Phosphoserine modification is found at S75. 2 EF-hand domains span residues 95 to 130 (DPED…QCDR) and 131 to 166 (FSQE…GDAK). A Phosphothreonine modification is found at T101.

As to quaternary structure, myosin is a hexamer of 2 heavy chains and 4 light chains. Expressed in fetal and adult skeletal muscle.

Myosin regulatory subunit that plays an essential role to maintain muscle integrity during early development. Plays a role in muscle contraction. This Homo sapiens (Human) protein is Myosin regulatory light chain 11.